The chain runs to 154 residues: Ascorbate-specific PTS system EIIA component (154 aa).

Positions 6–150 constitute a PTS EIIA type-2 domain; that stretch reads SLAENNSIRL…QEVLDLIDRT (145 aa). His68 acts as the Tele-phosphohistidine intermediate in catalysis. His68 is subject to Phosphohistidine.

It is found in the cytoplasm. In terms of biological role, the phosphoenolpyruvate-dependent sugar phosphotransferase system (sugar PTS), a major carbohydrate active transport system, catalyzes the phosphorylation of incoming sugar substrates concomitantly with their translocation across the cell membrane. The enzyme II UlaABC PTS system is involved in ascorbate transport. This Salmonella typhi protein is Ascorbate-specific PTS system EIIA component (ulaC).